Consider the following 479-residue polypeptide: Arf-GAP domain and FG repeat-containing protein 2 (479 aa).

Residues 27 to 153 (EVWCRRVREL…WYVPPEQVKG (127 aa)) enclose the Arf-GAP domain. The C4-type zinc finger occupies 47-70 (CFECAQRGVTYVDITVGSFVCTTC). Disordered stretches follow at residues 150-223 (QVKG…TKKA) and 450-479 (LSQP…NPFL). The span at 157-167 (SKGSVSATPVQ) shows a compositional bias: polar residues. Lys-174 bears the N6-acetyllysine mark. Low complexity predominate over residues 194-218 (SSQPGSQSQARSSSQARSSQPPSHS). The span at 454–479 (AGISTNPFMTGSSAFASKPPTTNPFL) shows a compositional bias: polar residues.

Interacts with EPS15R.

The sequence is that of Arf-GAP domain and FG repeat-containing protein 2 (Agfg2) from Mus musculus (Mouse).